We begin with the raw amino-acid sequence, 333 residues long: Casein kinase II subunit alpha-3 (333 aa).

A Protein kinase domain is found at 34–319 (YEVVRKVGRG…AREAMDHPYF (286 aa)). Residues 40-48 (VGRGKYSEV) and K63 contribute to the ATP site. D151 (proton acceptor) is an active-site residue.

The protein belongs to the protein kinase superfamily. Ser/Thr protein kinase family. CK2 subfamily. As to quaternary structure, heterotetramer of two catalytic alpha subunits and two regulatory beta subunits.

It is found in the nucleus. The protein resides in the nucleolus. The protein localises to the cytoplasm. The catalysed reaction is L-seryl-[protein] + ATP = O-phospho-L-seryl-[protein] + ADP + H(+). It catalyses the reaction L-threonyl-[protein] + ATP = O-phospho-L-threonyl-[protein] + ADP + H(+). Casein kinases are operationally defined by their preferential utilization of acidic proteins such as caseins as substrates. The alpha chain contains the catalytic site. The tetrameric holoenzyme CK2 is composed of two alpha and two beta subunits. Acts as a circadian clock component that maintains the correct period length through phosphorylation of CCA1. The chain is Casein kinase II subunit alpha-3 from Arabidopsis thaliana (Mouse-ear cress).